A 141-amino-acid polypeptide reads, in one-letter code: 3-hydroxyacyl-[acyl-carrier-protein] dehydratase FabZ (141 aa).

His-49 is an active-site residue.

The protein belongs to the thioester dehydratase family. FabZ subfamily.

The protein resides in the cytoplasm. It catalyses the reaction a (3R)-hydroxyacyl-[ACP] = a (2E)-enoyl-[ACP] + H2O. In terms of biological role, involved in unsaturated fatty acids biosynthesis. Catalyzes the dehydration of short chain beta-hydroxyacyl-ACPs and long chain saturated and unsaturated beta-hydroxyacyl-ACPs. This Enterococcus faecalis (strain ATCC 700802 / V583) protein is 3-hydroxyacyl-[acyl-carrier-protein] dehydratase FabZ (fabZ2).